Reading from the N-terminus, the 96-residue chain is Large ribosomal subunit protein bL27 (96 aa).

Residues 1–9 constitute a propeptide that is removed on maturation; it reads MLRLDLQFF.

It belongs to the bacterial ribosomal protein bL27 family. The N-terminus is cleaved by ribosomal processing cysteine protease Prp.

This Anoxybacillus flavithermus (strain DSM 21510 / WK1) protein is Large ribosomal subunit protein bL27.